A 38-amino-acid polypeptide reads, in one-letter code: Large ribosomal subunit protein bL36 (38 aa).

It belongs to the bacterial ribosomal protein bL36 family.

This chain is Large ribosomal subunit protein bL36, found in Chlorobium limicola (strain DSM 245 / NBRC 103803 / 6330).